A 362-amino-acid chain; its full sequence is Class I histocompatibility antigen, Gogo-B*0103 alpha chain (362 aa).

The N-terminal stretch at 1–24 (MRVTAPRTLLLLLSAALALTETWA) is a signal peptide. Positions 25-114 (GSHSMRYFDT…ALRYYNQSEA (90 aa)) are alpha-1. Residues 25-308 (GSHSMRYFDT…EPSSQSTIPI (284 aa)) are Extracellular-facing. Asn-110 carries N-linked (GlcNAc...) asparagine glycosylation. The alpha-2 stretch occupies residues 115 to 206 (GSHTIQWMYG…ENGRETLQRA (92 aa)). Disulfide bonds link Cys-125–Cys-188 and Cys-227–Cys-283. Positions 207–298 (DTPKTHVTHH…GLPKPLTLRW (92 aa)) are alpha-3. Residues 209–295 (PKTHVTHHPI…QHEGLPKPLT (87 aa)) enclose the Ig-like C1-type domain. Residues 299–308 (EPSSQSTIPI) form a connecting peptide region. The chain crosses the membrane as a helical span at residues 309-332 (VGIVAGLAVLAVVVIGAVVTAVIC). The Cytoplasmic portion of the chain corresponds to 333–362 (RRKSSGGKGGSYSQAASSDSAQGSDVSLTA). Residues 335–362 (KSSGGKGGSYSQAASSDSAQGSDVSLTA) are disordered. The span at 343 to 362 (SYSQAASSDSAQGSDVSLTA) shows a compositional bias: low complexity.

This sequence belongs to the MHC class I family. As to quaternary structure, heterodimer of an alpha chain and a beta chain (beta-2-microglobulin).

It is found in the membrane. In terms of biological role, involved in the presentation of foreign antigens to the immune system. The protein is Class I histocompatibility antigen, Gogo-B*0103 alpha chain of Gorilla gorilla gorilla (Western lowland gorilla).